Here is a 423-residue protein sequence, read N- to C-terminus: Glutamate-1-semialdehyde 2,1-aminomutase (423 aa).

The residue at position 259 (lysine 259) is an N6-(pyridoxal phosphate)lysine.

This sequence belongs to the class-III pyridoxal-phosphate-dependent aminotransferase family. HemL subfamily. Homodimer. Pyridoxal 5'-phosphate serves as cofactor.

It is found in the cytoplasm. It catalyses the reaction (S)-4-amino-5-oxopentanoate = 5-aminolevulinate. It participates in porphyrin-containing compound metabolism; protoporphyrin-IX biosynthesis; 5-aminolevulinate from L-glutamyl-tRNA(Glu): step 2/2. The chain is Glutamate-1-semialdehyde 2,1-aminomutase from Thermosipho melanesiensis (strain DSM 12029 / CIP 104789 / BI429).